A 104-amino-acid polypeptide reads, in one-letter code: Met repressor (104 aa).

It belongs to the MetJ family. In terms of assembly, homodimer.

The protein resides in the cytoplasm. Functionally, this regulatory protein, when combined with SAM (S-adenosylmethionine) represses the expression of the methionine regulon and of enzymes involved in SAM synthesis. In Shewanella oneidensis (strain ATCC 700550 / JCM 31522 / CIP 106686 / LMG 19005 / NCIMB 14063 / MR-1), this protein is Met repressor.